We begin with the raw amino-acid sequence, 98 residues long: Mobilization protein MobS (98 aa).

In terms of biological role, this protein is essential to promote the specific transfer of the plasmid in the presence of conjugative plasmids. The polypeptide is Mobilization protein MobS (mobS) (Acidithiobacillus ferridurans).